A 288-amino-acid polypeptide reads, in one-letter code: Energy-coupling factor transporter ATP-binding protein EcfA2 (288 aa).

Residues 3–245 form the ABC transporter domain; that stretch reads IEFKNVDYIY…PDWLKKHFLD (243 aa). 40-47 serves as a coordination point for ATP; that stretch reads GHTGSGKS.

Belongs to the ABC transporter superfamily. Energy-coupling factor EcfA family. As to quaternary structure, forms a stable energy-coupling factor (ECF) transporter complex composed of 2 membrane-embedded substrate-binding proteins (S component), 2 ATP-binding proteins (A component) and 2 transmembrane proteins (T component).

The protein resides in the cell membrane. Functionally, ATP-binding (A) component of a common energy-coupling factor (ECF) ABC-transporter complex. Unlike classic ABC transporters this ECF transporter provides the energy necessary to transport a number of different substrates. The protein is Energy-coupling factor transporter ATP-binding protein EcfA2 of Lactobacillus gasseri (strain ATCC 33323 / DSM 20243 / BCRC 14619 / CIP 102991 / JCM 1131 / KCTC 3163 / NCIMB 11718 / NCTC 13722 / AM63).